We begin with the raw amino-acid sequence, 985 residues long: NAD kinase 2, chloroplastic (985 aa).

A chloroplast-targeting transit peptide spans 1-62 (MFLCFCPCHV…KRRLRFVIRA (62 aa)). The calmodulin-binding stretch occupies residues 335-380 (APKAEQVELFASIVSDSSKRPIYVHSKEGVWRTSAMVSRWKQYMTR). Disordered regions lie at residues 389–466 (SEES…PPGN) and 548–615 (FSNG…DEAG). Composition is skewed to basic and acidic residues over residues 390–399 (EESKRREVSE) and 413–429 (VPDE…EVDS). Positions 548–569 (FSNGNVHASDNTNKSISDNRGN) are enriched in polar residues.

The protein belongs to the NAD kinase family. As to expression, expressed in leaves.

It is found in the plastid. Its subcellular location is the chloroplast. The enzyme catalyses NAD(+) + ATP = ADP + NADP(+) + H(+). In terms of biological role, involved in chlorophyll synthesis and chloroplast protection against oxidative damage. The polypeptide is NAD kinase 2, chloroplastic (NADK2) (Arabidopsis thaliana (Mouse-ear cress)).